Consider the following 661-residue polypeptide: MINRNTENQFKLVSKYAPSGDQPQAIETLVDNIEGGEKAQILMGATGTGKTYTMSQVIARVNKPTLVIAHNKTLAGQLYSEFKEFFPENAVEYFVSYYDYYQPEAYVPSSDTYIEKDSSVNDEIDKLRHSATSALLERNDVIVVASVSCIYGLGSPKEYSDSVVSLRPGQEISRDQLLNALVDIQFERNDIDFQRGRFRVRGDVVEIFPASRDEHAFRVEFFGDEIDRIREIESLTGKVLGDVDHLAIFPATHFVTNDDHMETAIAKIQAELEEQLKVFEAEGKLLEAQRLKQRTDYDIEMLREMGYTNGVENYSRHMDGRSEGEPPYTLLDFFPEDYLIMIDESHMTMGQIKGMYNGDRSRKEMLVNYGFRLPSALDNRPLRREEFESHVHQIVYVSATPGDYEMEQTETVVEQIIRPTGLLDPEVEVRPTMGQMDDLLGEINARVEKGERTFITTLTKKMAEDLTDYLKEMGVKVKYMHSDIKTLERTEIIRDLRLGVFDVLIGINLLREGIDVPEVSLVAILDADKEGFLRNERGLIQTIGRAARNSEGHVIMYADKVTESMRKAMEETARRRQIQMAYNEEHGIIPQTIKKEIRDLISVTKAVTQDKEEVVDFNALNKDERKAMIKKLEGQMQEAAEVLDFELAAQIRDMVIELKNM.

Residues aspartate 31–phenylalanine 186 form the Helicase ATP-binding domain. An ATP-binding site is contributed by glycine 44–threonine 51. The short motif at tyrosine 97–valine 120 is the Beta-hairpin element. A Helicase C-terminal domain is found at glutamine 435–isoleucine 601. In terms of domain architecture, UVR spans lysine 626–methionine 661.

The protein belongs to the UvrB family. As to quaternary structure, forms a heterotetramer with UvrA during the search for lesions. Interacts with UvrC in an incision complex.

The protein resides in the cytoplasm. Its function is as follows. The UvrABC repair system catalyzes the recognition and processing of DNA lesions. A damage recognition complex composed of 2 UvrA and 2 UvrB subunits scans DNA for abnormalities. Upon binding of the UvrA(2)B(2) complex to a putative damaged site, the DNA wraps around one UvrB monomer. DNA wrap is dependent on ATP binding by UvrB and probably causes local melting of the DNA helix, facilitating insertion of UvrB beta-hairpin between the DNA strands. Then UvrB probes one DNA strand for the presence of a lesion. If a lesion is found the UvrA subunits dissociate and the UvrB-DNA preincision complex is formed. This complex is subsequently bound by UvrC and the second UvrB is released. If no lesion is found, the DNA wraps around the other UvrB subunit that will check the other stand for damage. In Streptococcus suis (strain 98HAH33), this protein is UvrABC system protein B.